We begin with the raw amino-acid sequence, 156 residues long: Sec-independent protein translocase protein TatB (156 aa).

The chain crosses the membrane as a helical span at residues 2-22 (FSSVGWGEIFLLVVVGLVVIG). The tract at residues 100 to 156 (KIMAEGTEGEAQRNKQAADNNANVVERPADGSTARPTQNDPKDGPNYSGGVSWTDII) is disordered. Positions 113–122 (NKQAADNNAN) are enriched in polar residues.

This sequence belongs to the TatB family. The Tat system comprises two distinct complexes: a TatABC complex, containing multiple copies of TatA, TatB and TatC subunits, and a separate TatA complex, containing only TatA subunits. Substrates initially bind to the TatABC complex, which probably triggers association of the separate TatA complex to form the active translocon.

The protein resides in the cell membrane. Functionally, part of the twin-arginine translocation (Tat) system that transports large folded proteins containing a characteristic twin-arginine motif in their signal peptide across membranes. Together with TatC, TatB is part of a receptor directly interacting with Tat signal peptides. TatB may form an oligomeric binding site that transiently accommodates folded Tat precursor proteins before their translocation. The protein is Sec-independent protein translocase protein TatB of Corynebacterium glutamicum (strain ATCC 13032 / DSM 20300 / JCM 1318 / BCRC 11384 / CCUG 27702 / LMG 3730 / NBRC 12168 / NCIMB 10025 / NRRL B-2784 / 534).